A 118-amino-acid chain; its full sequence is Large ribosomal subunit protein bL20 (118 aa).

It belongs to the bacterial ribosomal protein bL20 family.

In terms of biological role, binds directly to 23S ribosomal RNA and is necessary for the in vitro assembly process of the 50S ribosomal subunit. It is not involved in the protein synthesizing functions of that subunit. This is Large ribosomal subunit protein bL20 from Photorhabdus laumondii subsp. laumondii (strain DSM 15139 / CIP 105565 / TT01) (Photorhabdus luminescens subsp. laumondii).